Here is a 541-residue protein sequence, read N- to C-terminus: Nucleoporin NUP57 (541 aa).

Low complexity predominate over residues 1 to 13 (MFGFSGSNNGFGN). The tract at residues 1–261 (MFGFSGSNNG…STGSNLQQQQ (261 aa)) is disordered. 2 FG repeats span residues 2-3 (FG) and 11-12 (FG). Residues 19 to 36 (TGFSFGQNNNNTNTQPSA) are compositionally biased toward polar residues. FXFG repeat units lie at residues 21-24 (FSFG) and 39-42 (FGFG). FG repeat units lie at residues 56–57 (FG) and 65–66 (FG). Residues 58-72 (ANQATNTFGSNQQSS) show a composition bias toward polar residues. A GLFG 1 repeat occupies 76 to 79 (GLFG). Residues 83-102 (ALGSLGSSSTTASGTTATGT) are compositionally biased toward low complexity. GLFG repeat units follow at residues 103 to 106 (GLFG), 120 to 123 (GLFG), 132 to 135 (GLFG), and 147 to 150 (GLFG). Positions 105–116 (FGQQTAQPQQST) are enriched in polar residues. Over residues 125-146 (KPTTTTGGLFGNSAQNNSTTSG) the composition is skewed to polar residues. The segment covering 153-172 (VGSTGSLMGGNSTQNTSNMN) has biased composition (polar residues). 4 GLFG repeats span residues 175–178 (GLFG), 190–193 (GLFG), 204–207 (GLFG), and 220–223 (GLFG). The segment covering 228–257 (PQTNTAPGLGNTVSTQPSFAWSKPSTGSNL) has biased composition (polar residues). Residues 398-425 (ILKAQSRNVEIEKRILKLGTQLATLKNR) adopt a coiled-coil conformation.

The protein belongs to the nucleoporin GLFG family. Component of the nuclear pore complex (NPC). NPC constitutes the exclusive means of nucleocytoplasmic transport. NPCs allow the passive diffusion of ions and small molecules and the active, nuclear transport receptor-mediated bidirectional transport of macromolecules such as proteins, RNAs, ribonucleoparticles (RNPs), and ribosomal subunits across the nuclear envelope. Due to its 8-fold rotational symmetry, all subunits are present with 8 copies or multiples thereof. NUP57 is part of the NUP57 subcomplex (NIC96, NSP1, NUP49, NUP57) interacting with NUP49 and NSP1. Interacts through its FG repeats with karyopherins.

It is found in the nucleus. The protein resides in the nuclear pore complex. Its subcellular location is the nucleus membrane. In terms of biological role, functions as a component of the nuclear pore complex (NPC). NPC components, collectively referred to as nucleoporins (NUPs), can play the role of both NPC structural components and of docking or interaction partners for transiently associated nuclear transport factors. Active directional transport is assured by both, a Phe-Gly (FG) repeat affinity gradient for these transport factors across the NPC and a transport cofactor concentration gradient across the nuclear envelope (GSP1 and GSP2 GTPases associated predominantly with GTP in the nucleus, with GDP in the cytoplasm). NUP57 plays an important role in several nuclear transport pathways including poly(A)+ RNA, tRNA, and pre-ribosome transport. The chain is Nucleoporin NUP57 (NUP57) from Saccharomyces cerevisiae (strain ATCC 204508 / S288c) (Baker's yeast).